The sequence spans 608 residues: Chaperone protein HtpG (608 aa).

Residues 1–332 are a; substrate-binding; sequence MQFQTEVNQL…VEDLPLNVSR (332 aa). Residues 333–536 form a b region; the sequence is EILQENQILK…KNKPDFAMQQ (204 aa). A c region spans residues 537-608; it reads LLKQMGQEQN…LTKIINKAFS (72 aa).

This sequence belongs to the heat shock protein 90 family. In terms of assembly, homodimer.

Its subcellular location is the cytoplasm. Its function is as follows. Molecular chaperone. Has ATPase activity. The sequence is that of Chaperone protein HtpG from Campylobacter jejuni subsp. jejuni serotype O:2 (strain ATCC 700819 / NCTC 11168).